The sequence spans 257 residues: Auxin-responsive protein IAA17 (257 aa).

2 disordered regions span residues 1–51 and 85–119; these read MSPP…PAAT and GKKA…QVVG. Residues 33–37 carry the EAR-like (transcriptional repression) motif; the sequence is LRLGL. Residues 105–118 show a composition bias toward low complexity; the sequence is AAAPQAPAAKAQVV. A PB1 domain is found at 151-239; the sequence is FLYVKVSMDG…SCRRLRIMKG (89 aa).

Belongs to the Aux/IAA family. As to quaternary structure, homodimers and heterodimers. Highly expressed in etiolated seedlings and flowers. Expressed in roots and green seedlings.

The protein localises to the nucleus. In terms of biological role, aux/IAA proteins are short-lived transcriptional factors that function as repressors of early auxin response genes at low auxin concentrations. This is Auxin-responsive protein IAA17 (IAA17) from Oryza sativa subsp. japonica (Rice).